A 422-amino-acid chain; its full sequence is Phthiocerol/phthiodiolone dimycocerosyl transferase (422 aa).

H124 serves as the catalytic Proton acceptor.

The protein belongs to the acyltransferase PapA5 family. As to quaternary structure, monomer. Interacts directly with the acyl carrier protein (ACP) domain of the mycocerosic acid synthase (mas) protein.

The catalysed reaction is 2 a mycocerosyl-[mycocerosic acid synthase] + a phthiocerol = a dimycocerosyl phthiocerol + 2 holo-[mycocerosic acid synthase].. It catalyses the reaction 2 a mycocerosyl-[mycocerosic acid synthase] + a phthiodiolone = a dimycocerosyl phthiodiolone + 2 holo-[mycocerosic acid synthase].. The enzyme catalyses 2 a mycocerosyl-[mycocerosic acid synthase] + a phenolphthiocerol = a dimycocerosyl phenolphthiocerol + 2 holo-[mycocerosic acid synthase].. Functionally, catalyzes diesterification of phthiocerol, phthiodiolone, and phenolphthiocerol with mycocerosic acids, the final step in the phthiocerol, phthiodiolone and phenolphthiocerol dimycocerosate esters (PDIM) synthesis. Can directly transfer the mycocerosate bound to the mycocerosic acid synthase (mas) onto the substrate alcohols. The sequence is that of Phthiocerol/phthiodiolone dimycocerosyl transferase (papA5) from Mycobacterium tuberculosis (strain ATCC 25177 / H37Ra).